The sequence spans 250 residues: Glutamate racemase (250 aa).

Residues 7-8 (DS) and 39-40 (YG) each bind substrate. Cysteine 70 acts as the Proton donor/acceptor in catalysis. 71–72 (NT) serves as a coordination point for substrate. Cysteine 180 acts as the Proton donor/acceptor in catalysis. 181 to 182 (TH) serves as a coordination point for substrate.

It belongs to the aspartate/glutamate racemases family.

The enzyme catalyses L-glutamate = D-glutamate. It functions in the pathway cell wall biogenesis; peptidoglycan biosynthesis. In terms of biological role, provides the (R)-glutamate required for cell wall biosynthesis. This chain is Glutamate racemase, found in Campylobacter jejuni subsp. jejuni serotype O:2 (strain ATCC 700819 / NCTC 11168).